Consider the following 151-residue polypeptide: Ribonuclease H (151 aa).

In terms of domain architecture, RNase H type-1 spans methionine 1–alanine 146. Positions 9, 52, 74, and 138 each coordinate Mg(2+).

The protein belongs to the RNase H family. In terms of assembly, monomer. It depends on Mg(2+) as a cofactor.

It is found in the cytoplasm. The enzyme catalyses Endonucleolytic cleavage to 5'-phosphomonoester.. Its function is as follows. Endonuclease that specifically degrades the RNA of RNA-DNA hybrids. The polypeptide is Ribonuclease H (Cereibacter sphaeroides (strain ATCC 17025 / ATH 2.4.3) (Rhodobacter sphaeroides)).